Here is a 343-residue protein sequence, read N- to C-terminus: 3-isopropylmalate dehydrogenase (343 aa).

4 residues coordinate substrate: R94, R104, R128, and D218. D218, D242, and D246 together coordinate Mg(2+). 278 to 290 (GSAPDIAGQNKAN) serves as a coordination point for NAD(+).

This sequence belongs to the isocitrate and isopropylmalate dehydrogenases family. LeuB type 2 subfamily. As to quaternary structure, homodimer. Requires Mg(2+) as cofactor. The cofactor is Mn(2+).

Its subcellular location is the cytoplasm. The catalysed reaction is (2R,3S)-3-isopropylmalate + NAD(+) = 4-methyl-2-oxopentanoate + CO2 + NADH. It functions in the pathway amino-acid biosynthesis; L-leucine biosynthesis; L-leucine from 3-methyl-2-oxobutanoate: step 3/4. In terms of biological role, catalyzes the oxidation of 3-carboxy-2-hydroxy-4-methylpentanoate (3-isopropylmalate) to 3-carboxy-4-methyl-2-oxopentanoate. The product decarboxylates to 4-methyl-2 oxopentanoate. The chain is 3-isopropylmalate dehydrogenase from Bifidobacterium longum (strain DJO10A).